The chain runs to 876 residues: Alanine--tRNA ligase (876 aa).

Position 74 is an N6-acetyllysine (Lys74). The Zn(2+) site is built by His564, His568, Cys666, and His670.

It belongs to the class-II aminoacyl-tRNA synthetase family. Homotetramer. The cofactor is Zn(2+).

The protein resides in the cytoplasm. The catalysed reaction is tRNA(Ala) + L-alanine + ATP = L-alanyl-tRNA(Ala) + AMP + diphosphate. Catalyzes the attachment of alanine to tRNA(Ala) in a two-step reaction: alanine is first activated by ATP to form Ala-AMP and then transferred to the acceptor end of tRNA(Ala). Also edits incorrectly charged Ser-tRNA(Ala) and Gly-tRNA(Ala) via its editing domain. The polypeptide is Alanine--tRNA ligase (Shigella boydii serotype 4 (strain Sb227)).